Consider the following 702-residue polypeptide: p-hydroxybenzoic acid--AMP ligase FadD22 (702 aa).

In terms of domain architecture, Carrier spans 538 to 616 (ERHRLVLDAV…GLAQYLEAEL (79 aa)). An O-(pantetheine 4'-phosphoryl)serine modification is found at serine 576.

It belongs to the ATP-dependent AMP-binding enzyme family.

The catalysed reaction is holo-[4-hydroxyphenylalkanoate synthase] + 4-hydroxybenzoate + ATP = 4-hydroxyphenyl-[4-hydroxyphenylalkanoate synthase] + AMP + diphosphate. It participates in lipid metabolism; fatty acid biosynthesis. Its function is as follows. Catalyzes the adenylation of p-hydroxybenzoic acid (pHBA) to form p-hydroxybenzoic acid-AMP (pHBA-AMP), which is converted directly to p-hydroxybenzoyl-S-FadD22 (pHBA-S-FAdD22) thioester intermediate in a CoA-independent manner by attack of the phosphopantetheine thiol of FadD22. This intermediate primes the biosynthesis of the phenolphthiocerol (PPOL) by presenting the pHBA starter unit for elongation by Pks15/1. PPOL is an important intermediate in the biosynthesis of phenolic glycolipid (mycosid B). This Mycobacterium marinum (strain ATCC BAA-535 / M) protein is p-hydroxybenzoic acid--AMP ligase FadD22 (fadD22).